We begin with the raw amino-acid sequence, 61 residues long: Small ribosomal subunit protein uS14B (61 aa).

Residues Cys-24, Cys-27, Cys-40, and Cys-43 each contribute to the Zn(2+) site.

It belongs to the universal ribosomal protein uS14 family. Zinc-binding uS14 subfamily. In terms of assembly, part of the 30S ribosomal subunit. Contacts proteins S3 and S10. Zn(2+) is required as a cofactor.

Its function is as follows. Binds 16S rRNA, required for the assembly of 30S particles and may also be responsible for determining the conformation of the 16S rRNA at the A site. The sequence is that of Small ribosomal subunit protein uS14B from Mycobacteroides abscessus (strain ATCC 19977 / DSM 44196 / CCUG 20993 / CIP 104536 / JCM 13569 / NCTC 13031 / TMC 1543 / L948) (Mycobacterium abscessus).